A 476-amino-acid chain; its full sequence is Ataxin-10 (476 aa).

Arg-10 carries the omega-N-methylarginine modification. Phosphoserine is present on residues Ser-13 and Ser-78. At Thr-83 the chain carries Phosphothreonine. Ser-431 bears the Phosphoserine mark.

The protein belongs to the ataxin-10 family. In terms of assembly, homooligomer. Interacts with GNB2. Interacts with IQCB1. Interacts with OGT. Polyubiquitinated. Post-translationally, phosphorylation at Ser-13 by AURKB promotes the association of ATXN10 with PLK1. Phosphorylation at Ser-78 and Thr-83 by PLK1 may play a role in the regulation of cytokinesis and may stimulate the proteasome-mediated degradation of ATXN10.

It localises to the cytoplasm. It is found in the perinuclear region. The protein resides in the midbody. Its subcellular location is the cytoskeleton. The protein localises to the cilium basal body. It localises to the microtubule organizing center. It is found in the centrosome. The protein resides in the centriole. Functionally, may play a role in the regulation of cytokinesis. May play a role in signaling by stimulating protein glycosylation. Induces neuritogenesis by activating the Ras-MAP kinase pathway and is necessary for the survival of cerebellar neurons. Does not appear to play a major role in ciliogenesis. The chain is Ataxin-10 (ATXN10) from Pongo abelii (Sumatran orangutan).